The following is a 385-amino-acid chain: Alkanesulfonate monooxygenase (385 aa).

The protein belongs to the SsuD family.

It carries out the reaction an alkanesulfonate + FMNH2 + O2 = an aldehyde + FMN + sulfite + H2O + 2 H(+). In terms of biological role, catalyzes the desulfonation of aliphatic sulfonates. The chain is Alkanesulfonate monooxygenase from Paraburkholderia phymatum (strain DSM 17167 / CIP 108236 / LMG 21445 / STM815) (Burkholderia phymatum).